The primary structure comprises 281 residues: 2-dehydro-3-deoxyphosphooctonate aldolase (281 aa).

It belongs to the KdsA family.

The protein resides in the cytoplasm. It carries out the reaction D-arabinose 5-phosphate + phosphoenolpyruvate + H2O = 3-deoxy-alpha-D-manno-2-octulosonate-8-phosphate + phosphate. Its pathway is carbohydrate biosynthesis; 3-deoxy-D-manno-octulosonate biosynthesis; 3-deoxy-D-manno-octulosonate from D-ribulose 5-phosphate: step 2/3. It functions in the pathway bacterial outer membrane biogenesis; lipopolysaccharide biosynthesis. The polypeptide is 2-dehydro-3-deoxyphosphooctonate aldolase (Pseudomonas entomophila (strain L48)).